The sequence spans 145 residues: MLSIDTNILLYAQNRDCPEHDAAAAFLVECAGRADVAVCELVLMELYQLLRNPTVVTRPLEGPEAAEVCQTFRRNRRWALLENAPVMNEVWVLAATPRIARRRLFDARLALTLRHHGVDEFATRNINGFTDFGFSRVWDPITSDG.

The region spanning 4 to 123 is the PINc domain; the sequence is IDTNILLYAQ…RHHGVDEFAT (120 aa). The Mg(2+) site is built by aspartate 5 and aspartate 106.

This sequence belongs to the PINc/VapC protein family. Mg(2+) is required as a cofactor.

Toxic component of a type II toxin-antitoxin (TA) system. An RNase. Its cognate antitoxin is VapB24. This Mycobacterium tuberculosis (strain CDC 1551 / Oshkosh) protein is Ribonuclease VapC24.